The primary structure comprises 383 residues: uncharacterized protein (383 aa).

To V.anguillarum virulence protein VirA.

Its function is as follows. Could have an enzymatic function. This is an uncharacterized protein from Sinorhizobium fredii (strain NBRC 101917 / NGR234).